A 572-amino-acid chain; its full sequence is Hexokinase (572 aa).

The Hexokinase domain maps to 49–492 (DEPPISLETV…SGKGAALITA (444 aa)). Positions 105–237 (NGTEEGRFIA…DIKVEVVALI (133 aa)) are hexokinase small subdomain. Residues 116 to 120 (DLGGT) and serine 185 contribute to the D-glucose 6-phosphate site. Residue 116-121 (DLGGTN) coordinates ATP. Residues 185-186 (SY), 202-203 (TK), and 238-239 (ND) contribute to the substrate site. The interval 238 to 481 (NDTVGTMVAA…LKFKLLQTAD (244 aa)) is hexokinase large subdomain. 2 residues coordinate D-glucose 6-phosphate: aspartate 239 and threonine 263. ATP is bound at residue threonine 263. Asparagine 266, glutamate 297, and aspartate 331 together coordinate substrate. Residues 336 to 337 (GK), 373 to 377 (TKYIS), and 448 to 452 (STYKY) contribute to the ATP site. D-glucose 6-phosphate contacts are provided by residues 446-448 (DGS) and serine 483.

Belongs to the hexokinase family.

It catalyses the reaction a D-hexose + ATP = a D-hexose 6-phosphate + ADP + H(+). The catalysed reaction is D-mannose + ATP = D-mannose 6-phosphate + ADP + H(+). The enzyme catalyses D-fructose + ATP = D-fructose 6-phosphate + ADP + H(+). It carries out the reaction D-glucose + ATP = D-glucose 6-phosphate + ADP + H(+). Its pathway is carbohydrate metabolism; hexose metabolism. It participates in carbohydrate degradation; glycolysis; D-glyceraldehyde 3-phosphate and glycerone phosphate from D-glucose: step 1/4. With respect to regulation, activated by glucose-6-phosphate. Inhibited by N-acetylglucosamine, glucosamine, mannoheptulose and ADP. Active against glucose, fructose, mannose, maltose and galactose. The sequence is that of Hexokinase from Brugia malayi (Filarial nematode worm).